The primary structure comprises 134 residues: Cilia- and flagella-associated protein 144 (134 aa).

Positions 76-95 (QGPRKKYPETQTENQEVGWD) are disordered.

This sequence belongs to the CFAP144 family. As to quaternary structure, microtubule inner protein component of sperm flagellar doublet microtubules.

The protein localises to the cytoplasm. It is found in the cytoskeleton. Its subcellular location is the cilium axoneme. The protein resides in the flagellum axoneme. Microtubule inner protein (MIP) part of the dynein-decorated doublet microtubules (DMTs) in cilia axoneme, which is required for motile cilia beating. This is Cilia- and flagella-associated protein 144 from Homo sapiens (Human).